A 130-amino-acid polypeptide reads, in one-letter code: MAQVQYRGTGRRKDSVARVRLVPGTGKIVMNDKSVEDYIPFADIRKELLQPFEVTETTDQYDVLVNVNGGGFHGQAGATRHGIARALLEVDPDFRTPLKRAGLLTRDARMKERKKPGLKKARKASQFSKR.

The tract at residues 105–130 is disordered; the sequence is TRDARMKERKKPGLKKARKASQFSKR. A compositionally biased stretch (basic residues) spans 111–130; that stretch reads KERKKPGLKKARKASQFSKR.

Belongs to the universal ribosomal protein uS9 family.

The chain is Small ribosomal subunit protein uS9 from Lactiplantibacillus plantarum (strain ATCC BAA-793 / NCIMB 8826 / WCFS1) (Lactobacillus plantarum).